Here is a 422-residue protein sequence, read N- to C-terminus: MLDINYIEQNLDEVIQILNKRNQQDYSEDLKYAVEKNLKRKQILVKSEALKSRKNQLSKEIGILIKDKKNEQADKAKAEVVSLNEQIIKLDEELRIVNDQILEKLSYIPNLSHKDIYFGKSDEDNVEIRKTKHNPLLTHSTPHWEIATKLGLVDFEKGVKLSGSRFLIYTGLGSKLVRAIADILLKRHEKHGYKEIFCPLIVNKSAMLGTGQLPKFSEDMYQVGEQYLIPTSEVPLTNLHANEILTYDMLPLKYTSFTQCFRQEAGSAGRDTKGMIRLHQFNKVELVKITHPDQSMNELESLVKDAEDVLNMFDLPYRVVELCSGDIGFSSAKTYDLEVWFPEQNKYREISSCSNCTDFQARNIQTRFKDKDGKIKLVHTLNGSGVAIDRLIATILENYWDGEKLVLPTILKPYFDNKEFLK.

Residue 231-233 (TSE) coordinates L-serine. 262-264 (RQE) is a binding site for ATP. Residue Glu-285 coordinates L-serine. Residue 349-352 (EISS) coordinates ATP. Residue Ser-384 participates in L-serine binding.

This sequence belongs to the class-II aminoacyl-tRNA synthetase family. Type-1 seryl-tRNA synthetase subfamily. As to quaternary structure, homodimer. The tRNA molecule binds across the dimer.

The protein resides in the cytoplasm. The catalysed reaction is tRNA(Ser) + L-serine + ATP = L-seryl-tRNA(Ser) + AMP + diphosphate + H(+). It carries out the reaction tRNA(Sec) + L-serine + ATP = L-seryl-tRNA(Sec) + AMP + diphosphate + H(+). It functions in the pathway aminoacyl-tRNA biosynthesis; selenocysteinyl-tRNA(Sec) biosynthesis; L-seryl-tRNA(Sec) from L-serine and tRNA(Sec): step 1/1. Functionally, catalyzes the attachment of serine to tRNA(Ser). Is also able to aminoacylate tRNA(Sec) with serine, to form the misacylated tRNA L-seryl-tRNA(Sec), which will be further converted into selenocysteinyl-tRNA(Sec). This Mycoplasma mycoides subsp. mycoides SC (strain CCUG 32753 / NCTC 10114 / PG1) protein is Serine--tRNA ligase.